The chain runs to 661 residues: MSRKSIVQIRRSEVKRKRSSTASSTSEGKTLHKNTHTSSKRQRTLTEFNIPTSSNLPVRSSSYSFSRFSCSTSNKNTEPVIINDDDHNSICLEDTAKVEITIDTDEEELVSLHDNEVSAIENRTEDRIVTELEEQVNVKVSTEVIQCPICLENLSHLELYERETHCDTCIGSDPSNMGTPKKNIRSFISNPSSPAKTKRDIATSKKPTRVKLVLPSFKIIKFNNGHEIVVDGFNYKASETISQYFLSHFHSDHYIGLKKSWNNPDENPIKKTLYCSKITAILVNLKFKIPMDEIQILPMNKRFWITDTISVVTLDANHCPGAIIMLFQEFLANSYDKPIRQILHTGDFRSNAKMIETIQKWLAETANETIDQVYLDTTYMTMGYNFPSQHSVCETVADFTLRLIKHGKNKTFGDSQRNLFHFQRKKTLTTHRYRVLFLVGTYTIGKEKLAIKICEFLKTKLFVMPNSVKFSMMLTVLQNNENQNDMWDESLLTSNLHESSVHLVPIRVLKSQETIEAYLKSLKELETDYVKDIEDVVGFIPTGWSHNFGLKYQKKNDDDENEMSGNTEYCLELMKNDRDNDDENGFEISSILRQYKKYNKFQVFNVPYSEHSSFNDLVKFGCKLKCSEVIPTVNLNNLWKVRYMTNWFQCWENVRKTRAAK.

Residues 1-44 are disordered; the sequence is MSRKSIVQIRRSEVKRKRSSTASSTSEGKTLHKNTHTSSKRQRT. Over residues 31 to 43 the composition is skewed to basic residues; the sequence is LHKNTHTSSKRQR. The segment at 144–174 adopts a UBZ4-type zinc-finger fold; it reads VIQCPICLENLSHLELYERETHCDTCIGSDP. Zn(2+)-binding residues include Cys-147, Cys-150, His-165, and Cys-169.

It belongs to the DNA repair metallo-beta-lactamase (DRMBL) family.

The protein resides in the nucleus. In terms of biological role, required for DNA interstrand cross-link repair. This requires cleavage of cross-linked DNA to generate DNA double strand breaks (DSBs). This protein has 5' exonuclease activity on single-stranded and double-stranded DNA, which appears to be necessary for the processing of DNA double strand breaks prior to ligation. This is DNA cross-link repair protein PSO2/SNM1 (PSO2) from Saccharomyces cerevisiae (strain ATCC 204508 / S288c) (Baker's yeast).